Reading from the N-terminus, the 325-residue chain is Beta-ketoacyl-[acyl-carrier-protein] synthase III (325 aa).

Catalysis depends on residues C112 and H250. The segment at 251–255 (QANIR) is ACP-binding. N280 is an active-site residue.

It belongs to the thiolase-like superfamily. FabH family. Homodimer.

The protein resides in the cytoplasm. It carries out the reaction malonyl-[ACP] + acetyl-CoA + H(+) = 3-oxobutanoyl-[ACP] + CO2 + CoA. It participates in lipid metabolism; fatty acid biosynthesis. In terms of biological role, catalyzes the condensation reaction of fatty acid synthesis by the addition to an acyl acceptor of two carbons from malonyl-ACP. Catalyzes the first condensation reaction which initiates fatty acid synthesis and may therefore play a role in governing the total rate of fatty acid production. Possesses both acetoacetyl-ACP synthase and acetyl transacylase activities. Its substrate specificity determines the biosynthesis of branched-chain and/or straight-chain of fatty acids. The chain is Beta-ketoacyl-[acyl-carrier-protein] synthase III from Clostridium acetobutylicum (strain ATCC 824 / DSM 792 / JCM 1419 / IAM 19013 / LMG 5710 / NBRC 13948 / NRRL B-527 / VKM B-1787 / 2291 / W).